A 466-amino-acid chain; its full sequence is UDP-N-acetylmuramoylalanine--D-glutamate ligase (466 aa).

Residue 121–127 participates in ATP binding; the sequence is GTNGKST.

This sequence belongs to the MurCDEF family.

It is found in the cytoplasm. The enzyme catalyses UDP-N-acetyl-alpha-D-muramoyl-L-alanine + D-glutamate + ATP = UDP-N-acetyl-alpha-D-muramoyl-L-alanyl-D-glutamate + ADP + phosphate + H(+). It functions in the pathway cell wall biogenesis; peptidoglycan biosynthesis. Its function is as follows. Cell wall formation. Catalyzes the addition of glutamate to the nucleotide precursor UDP-N-acetylmuramoyl-L-alanine (UMA). The sequence is that of UDP-N-acetylmuramoylalanine--D-glutamate ligase from Bradyrhizobium diazoefficiens (strain JCM 10833 / BCRC 13528 / IAM 13628 / NBRC 14792 / USDA 110).